The sequence spans 292 residues: NAD kinase (292 aa).

The Proton acceptor role is filled by D73. NAD(+) is bound by residues 73 to 74 (DG), 147 to 148 (NE), H158, R175, D177, 188 to 193 (TGYSLS), and Q247.

The protein belongs to the NAD kinase family. Requires a divalent metal cation as cofactor.

The protein localises to the cytoplasm. The catalysed reaction is NAD(+) + ATP = ADP + NADP(+) + H(+). Its function is as follows. Involved in the regulation of the intracellular balance of NAD and NADP, and is a key enzyme in the biosynthesis of NADP. Catalyzes specifically the phosphorylation on 2'-hydroxyl of the adenosine moiety of NAD to yield NADP. The protein is NAD kinase of Buchnera aphidicola subsp. Acyrthosiphon pisum (strain 5A).